The sequence spans 460 residues: tRNA modification GTPase MnmE (460 aa).

Residues arginine 25, glutamate 87, and arginine 126 each coordinate (6S)-5-formyl-5,6,7,8-tetrahydrofolate. The TrmE-type G domain maps to 221-381 (GLKVAIVGRP…LETAIANLVQ (161 aa)). Asparagine 231 provides a ligand contact to K(+). GTP contacts are provided by residues 231 to 236 (NVGKSS), 250 to 256 (TDLPGTT), and 275 to 278 (DTAG). Residue serine 235 coordinates Mg(2+). Residues threonine 250, leucine 252, and threonine 255 each coordinate K(+). Threonine 256 lines the Mg(2+) pocket. Lysine 460 is a binding site for (6S)-5-formyl-5,6,7,8-tetrahydrofolate.

It belongs to the TRAFAC class TrmE-Era-EngA-EngB-Septin-like GTPase superfamily. TrmE GTPase family. Homodimer. Heterotetramer of two MnmE and two MnmG subunits. K(+) is required as a cofactor.

The protein resides in the cytoplasm. In terms of biological role, exhibits a very high intrinsic GTPase hydrolysis rate. Involved in the addition of a carboxymethylaminomethyl (cmnm) group at the wobble position (U34) of certain tRNAs, forming tRNA-cmnm(5)s(2)U34. This chain is tRNA modification GTPase MnmE, found in Picosynechococcus sp. (strain ATCC 27264 / PCC 7002 / PR-6) (Agmenellum quadruplicatum).